A 488-amino-acid polypeptide reads, in one-letter code: Mannitol 2-dehydrogenase (488 aa).

Residue 37–48 (IVHVGVGGFHRA) participates in NAD(+) binding.

It belongs to the mannitol dehydrogenase family. Monomer.

The catalysed reaction is D-mannitol + NAD(+) = D-fructose + NADH + H(+). Catalyzes the NAD(H)-dependent interconversion of D-fructose and D-mannitol in the mannitol metabolic pathway. This is Mannitol 2-dehydrogenase from Aspergillus niger (strain ATCC MYA-4892 / CBS 513.88 / FGSC A1513).